The chain runs to 947 residues: Mitogen-activated protein kinase kinase kinase 14 (947 aa).

2 disordered regions span residues 1–37 (MAVM…KKQS) and 135–171 (KGKR…TPEQ). The segment covering 135–151 (KGKRRSKARKKRKKKSS) has biased composition (basic residues). The Protein kinase domain occupies 400 to 655 (ATHQLRLGRG…ELGGKVNRAL (256 aa)). The tract at residues 401 to 653 (THQLRLGRGS…AAELGGKVNR (253 aa)) is interaction with ZFP91. Residues 406–414 (LGRGSFGEV) and Lys-429 each bind ATP. Residue Asp-515 is the Proton acceptor of the active site. Position 559 is a phosphothreonine (Thr-559). Disordered regions lie at residues 662 to 766 (KSPW…ATVP) and 805 to 830 (LSDD…GVHS). Basic and acidic residues predominate over residues 665 to 674 (WRGEYKEPRH). A compositionally biased stretch (pro residues) spans 713–727 (LQPPLPPEPPEPNKS). Residues 741 to 752 (EPLPLSSLEPAP) show a composition bias toward low complexity. Residues 814 to 829 (SKASQSSRDTLSSGVH) are compositionally biased toward polar residues.

Belongs to the protein kinase superfamily. STE Ser/Thr protein kinase family. MAP kinase kinase kinase subfamily. Interacts with TRAF2, TRAF5, TRAF6, IKKA and NFKB2/P100. Interacts with TRAF3 and PELI3. Interacts with NIBP; the interaction is direct. Interacts with ARRB1 and ARRB2. Interacts with GRB10. Interacts with ZFP91. Interacts with NLRP12; this interaction promotes proteasomal degradation of MAP3K14. Directly interacts with DDX3X. Interacts (via C-terminus and kinase domain) with PPPC3A (via N-terminus) and PPP3CB. In terms of processing, autophosphorylated. Phosphorylation at Thr-559 is required to activate its kinase activity and 'Lys-63'-linked polyubiquitination. Phosphorylated by CHUK/IKKA leading to MAP3K14 destabilization. Post-translationally, ubiquitinated. Undergoes both 'Lys-48'- and 'Lys-63'-linked polyubiquitination. 'Lys-48'-linked polyubiquitination leads to its degradation by the proteasome, while 'Lys-63'-linked polyubiquitination stabilizes and activates it. Weakly expressed in testis, small intestine, spleen, thymus, peripheral blood leukocytes, prostate, ovary and colon.

It localises to the cytoplasm. It carries out the reaction L-seryl-[protein] + ATP = O-phospho-L-seryl-[protein] + ADP + H(+). It catalyses the reaction L-threonyl-[protein] + ATP = O-phospho-L-threonyl-[protein] + ADP + H(+). In terms of biological role, lymphotoxin beta-activated kinase which seems to be exclusively involved in the activation of NF-kappa-B and its transcriptional activity. Phosphorylates CHUK/IKKA, thereby promoting proteolytic processing of NFKB2/P100, which leads to NF-kappa-B activation via the non-canonical pathway. Has an essential role in the non-canonical NF-kappa-B signaling that regulates genes encoding molecules involved in B-cell survival, lymphoid organogenesis, and immune response. Could act in a receptor-selective manner. The polypeptide is Mitogen-activated protein kinase kinase kinase 14 (Homo sapiens (Human)).